A 480-amino-acid chain; its full sequence is tRNA-2-methylthio-N(6)-dimethylallyladenosine synthase (480 aa).

An MTTase N-terminal domain is found at 32–149 (RKLYIRTFGC…LPELIRRRRA (118 aa)). The [4Fe-4S] cluster site is built by cysteine 41, cysteine 78, cysteine 112, cysteine 186, cysteine 190, and cysteine 193. The 234-residue stretch at 172–405 (RIEGATAFVS…QALINAQAAA (234 aa)) folds into the Radical SAM core domain. Positions 408-471 (QAMVGTRQRL…PNSLRARVAD (64 aa)) constitute a TRAM domain.

The protein belongs to the methylthiotransferase family. MiaB subfamily. Monomer. It depends on [4Fe-4S] cluster as a cofactor.

It localises to the cytoplasm. It carries out the reaction N(6)-dimethylallyladenosine(37) in tRNA + (sulfur carrier)-SH + AH2 + 2 S-adenosyl-L-methionine = 2-methylsulfanyl-N(6)-dimethylallyladenosine(37) in tRNA + (sulfur carrier)-H + 5'-deoxyadenosine + L-methionine + A + S-adenosyl-L-homocysteine + 2 H(+). Its function is as follows. Catalyzes the methylthiolation of N6-(dimethylallyl)adenosine (i(6)A), leading to the formation of 2-methylthio-N6-(dimethylallyl)adenosine (ms(2)i(6)A) at position 37 in tRNAs that read codons beginning with uridine. In Bordetella petrii (strain ATCC BAA-461 / DSM 12804 / CCUG 43448), this protein is tRNA-2-methylthio-N(6)-dimethylallyladenosine synthase.